Here is a 399-residue protein sequence, read N- to C-terminus: Argininosuccinate synthase (399 aa).

8–16 (AYSGGLDTT) is a binding site for ATP. Tyr-87 is a binding site for L-citrulline. Gly-117 serves as a coordination point for ATP. Thr-119, Asn-123, and Asp-124 together coordinate L-aspartate. An L-citrulline-binding site is contributed by Asn-123. L-citrulline-binding residues include Arg-127, Ser-175, Glu-259, and Tyr-271.

The protein belongs to the argininosuccinate synthase family. Type 1 subfamily. As to quaternary structure, homotetramer.

It localises to the cytoplasm. It carries out the reaction L-citrulline + L-aspartate + ATP = 2-(N(omega)-L-arginino)succinate + AMP + diphosphate + H(+). It participates in amino-acid biosynthesis; L-arginine biosynthesis; L-arginine from L-ornithine and carbamoyl phosphate: step 2/3. The protein is Argininosuccinate synthase of Corynebacterium urealyticum (strain ATCC 43042 / DSM 7109).